A 123-amino-acid chain; its full sequence is Small ribosomal subunit protein uS12 (123 aa).

At aspartate 89 the chain carries 3-methylthioaspartic acid.

Belongs to the universal ribosomal protein uS12 family. In terms of assembly, part of the 30S ribosomal subunit. Contacts proteins S8 and S17. May interact with IF1 in the 30S initiation complex.

With S4 and S5 plays an important role in translational accuracy. Its function is as follows. Interacts with and stabilizes bases of the 16S rRNA that are involved in tRNA selection in the A site and with the mRNA backbone. Located at the interface of the 30S and 50S subunits, it traverses the body of the 30S subunit contacting proteins on the other side and probably holding the rRNA structure together. The combined cluster of proteins S8, S12 and S17 appears to hold together the shoulder and platform of the 30S subunit. The sequence is that of Small ribosomal subunit protein uS12 from Caulobacter vibrioides (strain ATCC 19089 / CIP 103742 / CB 15) (Caulobacter crescentus).